Here is a 114-residue protein sequence, read N- to C-terminus: MYCFLFLQKDTFFHEQFLARRRHAEVGPLRSAACRRRPGDLGFTVFSLLSLHTDRVAGAVRNHRRLSFFDDYGNTKSYLGAYTSKIGVLVVVCGFYFFLYLSMTVFLFFVLIII.

This is an uncharacterized protein from Human cytomegalovirus (strain AD169) (HHV-5).